Reading from the N-terminus, the 102-residue chain is Cell division topological specificity factor (102 aa).

It belongs to the MinE family.

Functionally, prevents the cell division inhibition by proteins MinC and MinD at internal division sites while permitting inhibition at polar sites. This ensures cell division at the proper site by restricting the formation of a division septum at the midpoint of the long axis of the cell. This is Cell division topological specificity factor from Synechococcus sp. (strain CC9605).